The sequence spans 299 residues: Sulfate adenylyltransferase subunit 2 (299 aa).

This sequence belongs to the PAPS reductase family. CysD subfamily. In terms of assembly, heterodimer composed of CysD, the smaller subunit, and CysN.

It catalyses the reaction sulfate + ATP + H(+) = adenosine 5'-phosphosulfate + diphosphate. The protein operates within sulfur metabolism; hydrogen sulfide biosynthesis; sulfite from sulfate: step 1/3. Functionally, with CysN forms the ATP sulfurylase (ATPS) that catalyzes the adenylation of sulfate producing adenosine 5'-phosphosulfate (APS) and diphosphate, the first enzymatic step in sulfur assimilation pathway. APS synthesis involves the formation of a high-energy phosphoric-sulfuric acid anhydride bond driven by GTP hydrolysis by CysN coupled to ATP hydrolysis by CysD. This chain is Sulfate adenylyltransferase subunit 2, found in Colwellia psychrerythraea (strain 34H / ATCC BAA-681) (Vibrio psychroerythus).